An 894-amino-acid polypeptide reads, in one-letter code: UPF0182 protein GSU2333 (894 aa).

Helical transmembrane passes span 6–26 (FLLIIAAVFVVLPAALSLITF), 50–70 (VGAGLASGLFMFAFAMVNLYF), 98–118 (MVQMVKPLSILAALVLSLLAG), 162–182 (KGFVAFTVLVTGIMVGAVYFF), 203–223 (LAILLGIFSLTLATGFYLDAV), 250–270 (ILTLATPLAGAVVAFGLWKGA), and 275–295 (LIPPIIVAAVYGIGIVGYPAM).

It belongs to the UPF0182 family.

The protein localises to the cell membrane. This is UPF0182 protein GSU2333 from Geobacter sulfurreducens (strain ATCC 51573 / DSM 12127 / PCA).